We begin with the raw amino-acid sequence, 333 residues long: Zinc-type alcohol dehydrogenase-like protein SACOL2177 (333 aa).

Belongs to the zinc-containing alcohol dehydrogenase family. Quinone oxidoreductase subfamily.

This chain is Zinc-type alcohol dehydrogenase-like protein SACOL2177, found in Staphylococcus aureus (strain COL).